Here is a 1748-residue protein sequence, read N- to C-terminus: Anaphase-promoting complex subunit 1 (1748 aa).

Disordered regions lie at residues 1–24 (MTSK…YTGD) and 1435–1479 (VSGV…DPTA). Residues 1435-1450 (VSGVTQVTSNTNTPGN) show a composition bias toward polar residues. A compositionally biased stretch (basic and acidic residues) spans 1451–1468 (SDRERVDETAASLDDERS). Phosphoserine is present on Ser-1462.

The protein belongs to the APC1 family. As to quaternary structure, the APC/C is composed of at least 13 subunits that stay tightly associated throughout the cell cycle: APC1, APC2, APC4, APC5, APC9, APC11, CDC16, CDC23, CDC26, CDC27, DOC1, MND2 and SWM1. APC1 interacts directly with MND2.

The protein resides in the nucleus. The protein localises to the cytoplasm. Its subcellular location is the cytoskeleton. It is found in the spindle pole. It participates in protein modification; protein ubiquitination. Functionally, component of the anaphase promoting complex/cyclosome (APC/C), a cell cycle-regulated E3 ubiquitin-protein ligase complex that controls progression through mitosis and the G1 phase of the cell cycle. The APC/C is thought to confer substrate specificity and, in the presence of ubiquitin-conjugating E2 enzymes, it catalyzes the formation of protein-ubiquitin conjugates that are subsequently degraded by the 26S proteasome. In early mitosis, the APC/C is activated by CDC20 and targets securin PDS1, the B-type cyclin CLB5, and other anaphase inhibitory proteins for proteolysis, thereby triggering the separation of sister chromatids at the metaphase-to-anaphase transition. In late mitosis and in G1, degradation of CLB5 allows activation of the APC/C by CDH1, which is needed to destroy CDC20 and the B-type cyclin CLB2 to allow exit from mitosis and creating the low CDK state necessary for cytokinesis and for reforming prereplicative complexes in G1 prior to another round of replication. This Saccharomyces cerevisiae (strain ATCC 204508 / S288c) (Baker's yeast) protein is Anaphase-promoting complex subunit 1 (APC1).